We begin with the raw amino-acid sequence, 163 residues long: Ribosome maturation factor RimM (163 aa).

Positions 90–155 (VGEYYCKDLV…ADIDLNKKRL (66 aa)) constitute a PRC barrel domain.

The protein belongs to the RimM family. In terms of assembly, binds ribosomal protein uS19.

Its subcellular location is the cytoplasm. In terms of biological role, an accessory protein needed during the final step in the assembly of 30S ribosomal subunit, possibly for assembly of the head region. Essential for efficient processing of 16S rRNA. May be needed both before and after RbfA during the maturation of 16S rRNA. It has affinity for free ribosomal 30S subunits but not for 70S ribosomes. The chain is Ribosome maturation factor RimM from Neorickettsia sennetsu (strain ATCC VR-367 / Miyayama) (Ehrlichia sennetsu).